A 529-amino-acid polypeptide reads, in one-letter code: MGSILSRRIAGVEDIDIQANSAYRYPPKSGNYFTSHFFMGGEKFDTPHPEGYLFGENMDLNFLGNRPVQFPYVTPAAHEPVKTLRSLVNIRKDSLRLVRYKDDSDSTPEDTGDPRVLYSVEFCFDTDARVAITLYCQAFEEFANGMAIYSAKSPSMVSETVHYKRGINQQFSLPSFKIDFTKWKPEELNFDLDKGVFPLVVQAIVDDGDDVTGHAHVLLAAFERHVDGSFSVKPLKQKQIVDRVSYLLQEIYGIENRNNQETKSTEDENSDNSSECVVCLSDLRDTLILPCRHLCLCNACADTLRYQANNCPICRLPFRALLQIRAVRKKTAATLSPVSFSPVLSQSSDHTEHSNADNIPPGYEPISLLEALNGVQPVSPSIPSAPLYEEIQFSGEMGDPLNLTGRQQNGDPGALKGKGSKSPDGSVRSPSSPIQEEEDEERLSELSDAQPQSVLPCSLSPSEDTVEGVTAKPGLPNSGSESRSLGVSVSEILQDCHSERSSLSQSESDPSADLALPASESWSTAVEEC.

Residues Glu-275–Cys-314 form an RING-type zinc finger. Disordered stretches follow at residues Ser-341–Gly-362 and Glu-396–Cys-529. 2 stretches are compositionally biased toward polar residues: residues Ala-449–Glu-463 and Asn-477–Val-487. A compositionally biased stretch (low complexity) spans Ser-501–Ser-511. A compositionally biased stretch (polar residues) spans Glu-520–Cys-529.

Autoubiquitinated in vitro.

The catalysed reaction is S-ubiquitinyl-[E2 ubiquitin-conjugating enzyme]-L-cysteine + [acceptor protein]-L-lysine = [E2 ubiquitin-conjugating enzyme]-L-cysteine + N(6)-ubiquitinyl-[acceptor protein]-L-lysine.. Its pathway is protein modification; protein ubiquitination. In terms of biological role, E3 ubiquitin-protein ligase. Also acts as a negative regulator of hedgehog signaling. The sequence is that of Probable E3 ubiquitin-protein ligase MGRN1 (mgrn1) from Danio rerio (Zebrafish).